We begin with the raw amino-acid sequence, 556 residues long: Urocanate hydratase (556 aa).

Residues 52–53 (GG), glutamine 130, 176–178 (GMG), glutamate 196, arginine 201, 242–243 (NA), 263–267 (QTSAH), 273–274 (YL), and tyrosine 322 contribute to the NAD(+) site. Cysteine 410 is an active-site residue. Glycine 492 serves as a coordination point for NAD(+).

This sequence belongs to the urocanase family. Requires NAD(+) as cofactor.

The protein resides in the cytoplasm. The catalysed reaction is 4-imidazolone-5-propanoate = trans-urocanate + H2O. It functions in the pathway amino-acid degradation; L-histidine degradation into L-glutamate; N-formimidoyl-L-glutamate from L-histidine: step 2/3. In terms of biological role, catalyzes the conversion of urocanate to 4-imidazolone-5-propionate. This chain is Urocanate hydratase, found in Acidiphilium cryptum (strain JF-5).